Reading from the N-terminus, the 342-residue chain is S-adenosylmethionine:tRNA ribosyltransferase-isomerase (342 aa).

The protein belongs to the QueA family. Monomer.

The protein resides in the cytoplasm. It carries out the reaction 7-aminomethyl-7-carbaguanosine(34) in tRNA + S-adenosyl-L-methionine = epoxyqueuosine(34) in tRNA + adenine + L-methionine + 2 H(+). The protein operates within tRNA modification; tRNA-queuosine biosynthesis. Functionally, transfers and isomerizes the ribose moiety from AdoMet to the 7-aminomethyl group of 7-deazaguanine (preQ1-tRNA) to give epoxyqueuosine (oQ-tRNA). In Bacillus velezensis (strain DSM 23117 / BGSC 10A6 / LMG 26770 / FZB42) (Bacillus amyloliquefaciens subsp. plantarum), this protein is S-adenosylmethionine:tRNA ribosyltransferase-isomerase.